Reading from the N-terminus, the 176-residue chain is Large ribosomal subunit protein uL16 (176 aa).

This sequence belongs to the universal ribosomal protein uL16 family.

This is Large ribosomal subunit protein uL16 from Thermoplasma acidophilum (strain ATCC 25905 / DSM 1728 / JCM 9062 / NBRC 15155 / AMRC-C165).